Here is a 448-residue protein sequence, read N- to C-terminus: MNKLEEHYIVPKDVVAELDKYIIGQDEAKKLVSIALVNRYIRSRLPKEIKDEVMPKNIIMIGSTGIGKTEIARRLSKLIKAPFIKVEATKYTEVGYVGRDVESMVRDLMSIAVNMVKEEMYSTVRDDALVRTEERIVDSLFKGSSNSENMDPNEIKAEEKVKEKLRKKLRAGELDDTTIEIQISSKMPFSTIEIFTGGNFEEIDMGIGGLLGNIFDRKKKRELKIKKAKEIILAEELEKLVDHENISDIAKSKVENMGIIFIDEIDKIAAKNRSGNDVSREGVQRDILPIIEGSKVNTKYGIVDTSHILFIAAGAFNLAKPSDLIPELQGRFPIKVELKSLSIDDLKKILKQTKNSLIKQYVAMFKVYDLDLKFSEEAIDRIAELTFNMNLESENLGARRLHGVMEIVLADLFFEVPGSKLKKFEINLDYVNKKIQINEQKDLNYYII.

ATP-binding positions include isoleucine 23, 65 to 70 (GIGKTE), aspartate 263, glutamate 327, and arginine 399.

The protein belongs to the ClpX chaperone family. HslU subfamily. A double ring-shaped homohexamer of HslV is capped on each side by a ring-shaped HslU homohexamer. The assembly of the HslU/HslV complex is dependent on binding of ATP.

Its subcellular location is the cytoplasm. ATPase subunit of a proteasome-like degradation complex; this subunit has chaperone activity. The binding of ATP and its subsequent hydrolysis by HslU are essential for unfolding of protein substrates subsequently hydrolyzed by HslV. HslU recognizes the N-terminal part of its protein substrates and unfolds these before they are guided to HslV for hydrolysis. This is ATP-dependent protease ATPase subunit HslU from Borreliella burgdorferi (strain ATCC 35210 / DSM 4680 / CIP 102532 / B31) (Borrelia burgdorferi).